The sequence spans 501 residues: Lysine--tRNA ligase (501 aa).

Mg(2+) is bound by residues E402 and E409.

The protein belongs to the class-II aminoacyl-tRNA synthetase family. Homodimer. The cofactor is Mg(2+).

Its subcellular location is the cytoplasm. The enzyme catalyses tRNA(Lys) + L-lysine + ATP = L-lysyl-tRNA(Lys) + AMP + diphosphate. This chain is Lysine--tRNA ligase, found in Helicobacter pylori (strain G27).